The following is a 91-amino-acid chain: Small ribosomal subunit protein bS20 (91 aa).

Disordered regions lie at residues 1–26 (MALR…RSRK) and 67–91 (HKNA…AQQS).

The protein belongs to the bacterial ribosomal protein bS20 family.

Functionally, binds directly to 16S ribosomal RNA. The chain is Small ribosomal subunit protein bS20 from Deinococcus deserti (strain DSM 17065 / CIP 109153 / LMG 22923 / VCD115).